Here is a 1153-residue protein sequence, read N- to C-terminus: Nitric oxide synthase (1153 aa).

Ser3 lines the (6R)-L-erythro-5,6,7,8-tetrahydrobiopterin pocket. Cys82 lines the heme b pocket. L-arginine-binding residues include Gln145, Trp254, and Asn264. Phe358 is a (6R)-L-erythro-5,6,7,8-tetrahydrobiopterin binding site. Residues 397-417 form a calmodulin-binding region; it reads PKRKLGFKALARAVEFSASLM. The Flavodoxin-like domain occupies 427 to 610; it reads CSIFYATETG…SFRAWSEEVF (184 aa). Residue 556–587 coordinates FMN; that stretch reads VFGLGSKAYPYYAAYGKYIYLMLQELGAERLV. Residues 660-903 form the FAD-binding FR-type domain; that stretch reads KEVMPLILAE…LRSAPHFHLP (244 aa). FAD contacts are provided by residues 697–708 and 836–846; these read YAPGDHVAIFPA and LQPRYYSISSS. 911–929 is an NADP(+) binding site; sequence IMIGPGSGIAPFRSFWQQR. 11 consecutive repeat copies span residues 934–940, 941–947, 948–954, 955–961, 962–968, 969–975, 976–982, 983–989, 990–996, 997–1003, and 1004–1010. The tract at residues 934–1010 is 11 X 7 AA tandem repeats of E-[NTR]-[ST]-[IM]-[PLQ]-[SP]-[CW]; sequence ENTMPSCENT…PSWERTMQPC (77 aa). 1089 to 1104 lines the NADP(+) pocket; the sequence is GGHFYVSGDVSMAHDV.

Belongs to the NOS family. Heme b serves as cofactor. FAD is required as a cofactor. The cofactor is FMN. In terms of tissue distribution, expressed in the central nervous system, in the serotonergic cerebral giant cells. The isoform Long and isoform Short are expressed equally in the CNS.

The catalysed reaction is 2 L-arginine + 3 NADPH + 4 O2 + H(+) = 2 L-citrulline + 2 nitric oxide + 3 NADP(+) + 4 H2O. Its activity is regulated as follows. Stimulated by calcium/calmodulin. Produces nitric oxide (NO) which is a messenger molecule with diverse functions throughout the body. The protein is Nitric oxide synthase (NOS) of Lymnaea stagnalis (Great pond snail).